The primary structure comprises 360 residues: Peptide chain release factor 1 (360 aa).

N5-methylglutamine is present on glutamine 235.

This sequence belongs to the prokaryotic/mitochondrial release factor family. In terms of processing, methylated by PrmC. Methylation increases the termination efficiency of RF1.

Its subcellular location is the cytoplasm. Functionally, peptide chain release factor 1 directs the termination of translation in response to the peptide chain termination codons UAG and UAA. This Leptothrix cholodnii (strain ATCC 51168 / LMG 8142 / SP-6) (Leptothrix discophora (strain SP-6)) protein is Peptide chain release factor 1.